We begin with the raw amino-acid sequence, 272 residues long: MFDNLSGVSYGLLAGILAMLIHLVYQKITELKRRKDELKERESHPTDDLFPKEDFIPYHPSRYSEEEMIKRSNDFYLSMNARRSVRFFSNEDVPDEVIDNIIRTAGTSPSGAHTEPWTFVVIKNKLLKAKVREIIEEEEELNYKQRMGQKWVDDLKPLKTNWIKEYLTEAPYLILVFKQTYGITEDGQKKTHYYNEISASISCGFLLAAIQNAGLVALTSTPLNAGSKLRNLVGRGPNEKIVILLPVGYPSKNCQVPNLKRKPLNEIMIKFD.

The helical transmembrane segment at 5 to 25 (LSGVSYGLLAGILAMLIHLVY) threads the bilayer. Residues 82 to 86 (RRSVR), serine 110, and 110 to 111 (SG) contribute to the FMN site. 3-iodo-L-tyrosine-binding residues include alanine 112, glutamate 139, tyrosine 143, and lysine 164. FMN is bound by residues 219–221 (TST) and arginine 261.

Belongs to the nitroreductase family. The cofactor is FMN.

The protein resides in the membrane. The catalysed reaction is 2 iodide + L-tyrosine + 2 NADP(+) = 3,5-diiodo-L-tyrosine + 2 NADPH + H(+). It catalyses the reaction iodide + L-tyrosine + NADP(+) = 3-iodo-L-tyrosine + NADPH. It carries out the reaction 3-iodo-L-tyrosine + iodide + NADP(+) = 3,5-diiodo-L-tyrosine + NADPH + H(+). The enzyme catalyses L-tyrosine + chloride + NADP(+) = 3-chloro-L-tyrosine + NADPH. The catalysed reaction is bromide + L-tyrosine + NADP(+) = 3-bromo-L-tyrosine + NADPH. Its function is as follows. Catalyzes the dehalogenation of halotyrosines such as 3,5-diiodo-L-tyrosine. Likely to also catalyze the dehalogenation of other halotyrosines such as 3-bromo-L-tyrosine, 3-chloro-L-tyrosine and 3-iodo-L-tyrosine. The sequence is that of Iodotyrosine deiodinase from Hydra vulgaris (Hydra).